Reading from the N-terminus, the 303-residue chain is tRNA dimethylallyltransferase (303 aa).

12-19 (GTTASGKS) contacts ATP. Residue 14-19 (TASGKS) coordinates substrate. The interval 37 to 40 (DSRQ) is interaction with substrate tRNA.

The protein belongs to the IPP transferase family. As to quaternary structure, monomer. It depends on Mg(2+) as a cofactor.

The enzyme catalyses adenosine(37) in tRNA + dimethylallyl diphosphate = N(6)-dimethylallyladenosine(37) in tRNA + diphosphate. Its function is as follows. Catalyzes the transfer of a dimethylallyl group onto the adenine at position 37 in tRNAs that read codons beginning with uridine, leading to the formation of N6-(dimethylallyl)adenosine (i(6)A). The protein is tRNA dimethylallyltransferase of Synechocystis sp. (strain ATCC 27184 / PCC 6803 / Kazusa).